A 1401-amino-acid chain; its full sequence is Enhancer of mRNA-decapping protein 4 (1401 aa).

Alanine 2 carries the N-acetylalanine modification. Phosphoserine is present on residues serine 3 and serine 6. The disordered stretch occupies residues 23-42 (DRPAGGPSAESPRPSSAYNG). 7 WD repeats span residues 121–164 (QPVA…VISV), 167–206 (SERT…VWRL), 217–269 (ILVH…VWDL), 287–326 (KQGF…FWQI), 335–385 (RCLH…MWCT), 389–426 (TCLQ…LSDV), and 432–475 (YVME…LRHT). At lysine 125 the chain carries N6-acetyllysine. The disordered stretch occupies residues 545 to 565 (TFGESRPELGSEGLGSAAHGS). Serine 560, serine 565, serine 583, and serine 585 each carry phosphoserine. Disordered regions lie at residues 603-628 (ASLQ…SSSS) and 662-702 (DGSL…QVPT). Low complexity predominate over residues 609 to 628 (TASPSSSSSGSSSSSSSSSS). A compositionally biased stretch (polar residues) spans 663 to 675 (GSLTMSSSGSLQA). Serine 676 carries the post-translational modification Phosphoserine. Over residues 677-689 (PRGLLPGLLPAPA) the composition is skewed to low complexity. Position 693 is a phosphothreonine (threonine 693). Serine 708, serine 723, and serine 725 each carry phosphoserine. Disordered regions lie at residues 717 to 741 (LGLP…TALS) and 778 to 808 (LLSP…HNTP). The segment covering 722 to 741 (ASPSRTRSPDVISSASTALS) has biased composition (polar residues). Threonine 727 bears the Phosphothreonine mark. Residues serine 729 and serine 741 each carry the phosphoserine modification. Threonine 821 carries the post-translational modification Phosphothreonine. A phosphoserine mark is found at serine 844, serine 871, serine 875, serine 879, serine 887, serine 890, and serine 892. A disordered region spans residues 868 to 946 (QRDSQDASAE…RLTEHQVAEP (79 aa)). Residues 913–934 (GSPRTSPKLKRKSKKDDGDAAM) are sufficient for nuclear localization. Residues 954-1025 (IWQQQRELAE…GGQLQEQLTQ (72 aa)) adopt a coiled-coil conformation. Residues serine 967 and serine 1380 each carry the phosphoserine modification.

Belongs to the WD repeat EDC4 family. As to quaternary structure, part of a decapping complex consisting of DCP1A, DCP2, EDC3, EDC4 and probably DDX6. Part of a complex consisting of DCP1A, EDC3, EDC4 and DDX6. Part of a complex consisting of DCP1B, EDC3, EDC4 and DDX6. Interacts with DCP2. Interacts with RC3H1. Interacts with NBDY. Interacts with TEX19. Interacts with LSM14A. Interacts with DDX6. In terms of assembly, (Microbial infection) Interacts with rotavirus A non-structural protein 2; this interaction probably plays a role in the sequestration of EDC4 in viral factories. Interacts with rotavirus A non-structural protein 5; this interaction probably plays a role in its sequestration in viral factories.

The protein resides in the cytoplasm. It localises to the P-body. It is found in the nucleus. In the process of mRNA degradation, seems to play a role in mRNA decapping. Component of a complex containing DCP2 and DCP1A which functions in decapping of ARE-containing mRNAs. Promotes complex formation between DCP1A and DCP2. Enhances the catalytic activity of DCP2 (in vitro). This Homo sapiens (Human) protein is Enhancer of mRNA-decapping protein 4 (EDC4).